The chain runs to 65 residues: Large ribosomal subunit protein bL33c (65 aa).

The protein belongs to the bacterial ribosomal protein bL33 family.

The protein resides in the plastid. It is found in the chloroplast. The polypeptide is Large ribosomal subunit protein bL33c (Staurastrum punctulatum (Green alga)).